Consider the following 223-residue polypeptide: Ribonuclease 3 (223 aa).

Residues 3 to 125 enclose the RNase III domain; that stretch reads LERLQKKLGY…IIAAIYLDAG (123 aa). A Mg(2+)-binding site is contributed by E38. The active site involves D42. Residues D111 and E114 each coordinate Mg(2+). The active site involves E114. In terms of domain architecture, DRBM spans 152–222; that stretch reads DPKTRLQEFL…AEQVLAKLTT (71 aa).

Belongs to the ribonuclease III family. In terms of assembly, homodimer. It depends on Mg(2+) as a cofactor.

The protein localises to the cytoplasm. It catalyses the reaction Endonucleolytic cleavage to 5'-phosphomonoester.. Functionally, digests double-stranded RNA. Involved in the processing of primary rRNA transcript to yield the immediate precursors to the large and small rRNAs (23S and 16S). Processes some mRNAs, and tRNAs when they are encoded in the rRNA operon. Processes pre-crRNA and tracrRNA of type II CRISPR loci if present in the organism. The sequence is that of Ribonuclease 3 from Actinobacillus pleuropneumoniae serotype 3 (strain JL03).